The following is a 274-amino-acid chain: Glutamate racemase (274 aa).

Residues 9-10 (DS) and 41-42 (YG) contribute to the substrate site. The active-site Proton donor/acceptor is the cysteine 72. Residue 73-74 (NT) participates in substrate binding. Cysteine 184 functions as the Proton donor/acceptor in the catalytic mechanism. 185-186 (TH) contacts substrate.

This sequence belongs to the aspartate/glutamate racemases family.

The enzyme catalyses L-glutamate = D-glutamate. It participates in cell wall biogenesis; peptidoglycan biosynthesis. Its function is as follows. Provides the (R)-glutamate required for cell wall biosynthesis. The polypeptide is Glutamate racemase (Oceanobacillus iheyensis (strain DSM 14371 / CIP 107618 / JCM 11309 / KCTC 3954 / HTE831)).